Here is a 226-residue protein sequence, read N- to C-terminus: Lysoplasmalogenase TMEM86B (226 aa).

Topologically, residues 1-23 (MDARKEGLPLETLFSDQYPQVRR) are cytoplasmic. A helical membrane pass occupies residues 24 to 40 (WLAPFILACSLYFLLWI). At 41-46 (PVDQPS) the chain is on the extracellular side. The chain crosses the membrane as a helical span at residues 47–68 (WVSALIKCQPILCLVVFLWAVA). The Cytoplasmic segment spans residues 69-74 (PGGSST). A helical membrane pass occupies residues 75–93 (WLLQGALVCSAVGDACLIW). Residues 94–99 (PEAFFY) are Extracellular-facing. A helical membrane pass occupies residues 100 to 117 (GTAAFSVAHLFYLGAFGL). At 118–123 (TPLQPG) the chain is on the cytoplasmic side. The chain crosses the membrane as a helical span at residues 124–140 (LLLCTTLASLTYYSFLL). Over 141 to 146 (LHLEQG) the chain is Extracellular. Residues 147 to 163 (MVLPVMAYGLILNSMLW) form a helical membrane-spanning segment. Topologically, residues 164 to 171 (RSLVWGGS) are cytoplasmic. The chain crosses the membrane as a helical span at residues 172–188 (ASWGAVLFTFSDGVLAW). Residues 189–199 (DTFVYSLPFAR) lie on the Extracellular side of the membrane. Residues 200–218 (LVTMSTYYAAQLLLILSAL) form a helical membrane-spanning segment. Over 219 to 226 (RNPGLKTH) the chain is Cytoplasmic.

Belongs to the TMEM86 family. Homodimer. In terms of tissue distribution, enriched in liver. Also detected in brain and testis.

Its subcellular location is the endoplasmic reticulum membrane. The protein localises to the cytoplasm. It carries out the reaction a 1-O-(1Z-alkenyl)-sn-glycero-3-phosphocholine + H2O = a 2,3-saturated aldehyde + sn-glycerol 3-phosphocholine. The enzyme catalyses a 1-O-(1Z-alkenyl)-sn-glycero-3-phosphoethanolamine + H2O = a 2,3-saturated aldehyde + sn-glycero-3-phosphoethanolamine. With respect to regulation, competitively inhibited by lysophosphatidic acid. Functionally, catalyzes the hydrolysis of the vinyl ether bond of choline or ethanolamine lysoplasmalogens, forming fatty aldehyde and glycerophosphocholine or glycerophosphoethanolamine, respectively and is specific for the sn-2-deacylated (lyso) form of plasmalogen. This chain is Lysoplasmalogenase TMEM86B (Tmem86b), found in Mus musculus (Mouse).